The sequence spans 396 residues: Dihydrolipoyllysine-residue acetyltransferase component of pyruvate dehydrogenase complex (396 aa).

Positions 1-69 (MPDIGLEEVE…KTDALIMRCE (69 aa)) constitute a Lipoyl-binding domain. Lys35 is modified (N6-lipoyllysine). A Peripheral subunit-binding (PSBD) domain is found at 104 to 141 (HATPLIRRLARNLNINLYDVVGTGPKNRILKEDLDLYQ). His369 is a catalytic residue.

The protein belongs to the 2-oxoacid dehydrogenase family. In terms of assembly, forms a 24-polypeptide structural core with octahedral symmetry. (R)-lipoate serves as cofactor.

It catalyses the reaction N(6)-[(R)-dihydrolipoyl]-L-lysyl-[protein] + acetyl-CoA = N(6)-[(R)-S(8)-acetyldihydrolipoyl]-L-lysyl-[protein] + CoA. In terms of biological role, the pyruvate dehydrogenase complex catalyzes the overall conversion of pyruvate to acetyl-CoA and CO(2). It contains multiple copies of three enzymatic components: pyruvate dehydrogenase (E1), dihydrolipoamide acetyltransferase (E2) and lipoamide dehydrogenase (E3). This is Dihydrolipoyllysine-residue acetyltransferase component of pyruvate dehydrogenase complex (aceF) from Buchnera aphidicola subsp. Acyrthosiphon pisum (strain APS) (Acyrthosiphon pisum symbiotic bacterium).